The sequence spans 242 residues: Anti-Pycsar protein Apyc1 (242 aa).

The tract at residues 17–216 (FNNNALIEQD…EMQSIIKLMH (200 aa)) is beta-lactamase-like. His59, His61, Asp63, His64, His142, Asp162, and His216 together coordinate Zn(2+).

It belongs to the anti-Pycsar protein Apyc1 family. In terms of assembly, homodimer. The cofactor is Zn(2+).

The catalysed reaction is 3',5'-cyclic CMP + H2O = CMP + H(+). The enzyme catalyses 3',5'-cyclic UMP + H2O = UMP + H(+). Counteracts the endogenous Pycsar antiviral defense system. Phosphodiesterase that enables metal-dependent hydrolysis of host cyclic nucleotide Pycsar defense signals such as cCMP and cUMP. This chain is Anti-Pycsar protein Apyc1, found in Saccharibacillus brassicae.